A 512-amino-acid polypeptide reads, in one-letter code: ATP synthase subunit alpha (512 aa).

169-176 (GDRQTGKT) provides a ligand contact to ATP.

This sequence belongs to the ATPase alpha/beta chains family. As to quaternary structure, F-type ATPases have 2 components, CF(1) - the catalytic core - and CF(0) - the membrane proton channel. CF(1) has five subunits: alpha(3), beta(3), gamma(1), delta(1), epsilon(1). CF(0) has three main subunits: a(1), b(2) and c(9-12). The alpha and beta chains form an alternating ring which encloses part of the gamma chain. CF(1) is attached to CF(0) by a central stalk formed by the gamma and epsilon chains, while a peripheral stalk is formed by the delta and b chains.

The protein resides in the cell inner membrane. The catalysed reaction is ATP + H2O + 4 H(+)(in) = ADP + phosphate + 5 H(+)(out). Produces ATP from ADP in the presence of a proton gradient across the membrane. The alpha chain is a regulatory subunit. In Orientia tsutsugamushi (strain Boryong) (Rickettsia tsutsugamushi), this protein is ATP synthase subunit alpha.